The primary structure comprises 162 residues: Ribosome maturation factor RimP (162 aa).

This sequence belongs to the RimP family.

It localises to the cytoplasm. Its function is as follows. Required for maturation of 30S ribosomal subunits. The polypeptide is Ribosome maturation factor RimP (Streptococcus gordonii (strain Challis / ATCC 35105 / BCRC 15272 / CH1 / DL1 / V288)).